Consider the following 557-residue polypeptide: Kelch repeat and BTB domain-containing protein 2 (557 aa).

Residues 26-95 (CDVIITIGDG…LYNRHISSMN (70 aa)) enclose the BTB domain. The BACK domain maps to 133–223 (HKLYEMVHIP…CIDIQNLDKK (91 aa)). 3 Kelch repeats span residues 305-352 (EIII…VIDD), 353-399 (TIYA…VLDQ), and 401-464 (IYII…SHKD).

Interacts (via BTB domain) with host CUL3.

The protein resides in the host cytoplasm. Its function is as follows. Probable substrate-specific adapter of CUL3-containing E3 ubiquitin-protein ligases which mediate the ubiquitination and subsequent proteasomal degradation of host target proteins. The protein is Kelch repeat and BTB domain-containing protein 2 (KBTB2) of Bos taurus (Bovine).